Here is a 343-residue protein sequence, read N- to C-terminus: N-acetyl-gamma-glutamyl-phosphate reductase (343 aa).

C146 is a catalytic residue.

Belongs to the NAGSA dehydrogenase family. Type 1 subfamily.

It is found in the cytoplasm. The enzyme catalyses N-acetyl-L-glutamate 5-semialdehyde + phosphate + NADP(+) = N-acetyl-L-glutamyl 5-phosphate + NADPH + H(+). The protein operates within amino-acid biosynthesis; L-arginine biosynthesis; N(2)-acetyl-L-ornithine from L-glutamate: step 3/4. Its function is as follows. Catalyzes the NADPH-dependent reduction of N-acetyl-5-glutamyl phosphate to yield N-acetyl-L-glutamate 5-semialdehyde. The chain is N-acetyl-gamma-glutamyl-phosphate reductase from Pseudarthrobacter chlorophenolicus (strain ATCC 700700 / DSM 12829 / CIP 107037 / JCM 12360 / KCTC 9906 / NCIMB 13794 / A6) (Arthrobacter chlorophenolicus).